The following is a 376-amino-acid chain: Ribosomal RNA large subunit methyltransferase G (376 aa).

It belongs to the methyltransferase superfamily. RlmG family.

Its subcellular location is the cytoplasm. It carries out the reaction guanosine(1835) in 23S rRNA + S-adenosyl-L-methionine = N(2)-methylguanosine(1835) in 23S rRNA + S-adenosyl-L-homocysteine + H(+). Its function is as follows. Specifically methylates the guanine in position 1835 (m2G1835) of 23S rRNA. In Klebsiella pneumoniae subsp. pneumoniae (strain ATCC 700721 / MGH 78578), this protein is Ribosomal RNA large subunit methyltransferase G.